Here is a 238-residue protein sequence, read N- to C-terminus: Citrate-binding protein (238 aa).

Positions 1–31 (MKMKRSPYCFCCSFALLLLVSFLKDRHFCSA) are cleaved as a signal peptide. Residues 225–238 (LEGCNNNHGTWLVQ) constitute a propeptide, removed in mature form.

It is found in the vacuole. May be a subunit of a vacuolar malate and citrate transporter. The protein is Citrate-binding protein (CBP) of Hevea brasiliensis (Para rubber tree).